A 63-amino-acid polypeptide reads, in one-letter code: Large ribosomal subunit protein uL30 (63 aa).

Belongs to the universal ribosomal protein uL30 family. Part of the 50S ribosomal subunit.

The polypeptide is Large ribosomal subunit protein uL30 (Xylella fastidiosa (strain 9a5c)).